The chain runs to 356 residues: Holliday junction branch migration complex subunit RuvB (356 aa).

Residues 4-190 (TDKLAAERII…FGIVARLEFY (187 aa)) are large ATPase domain (RuvB-L). Residues Leu29, Arg30, Gly71, Lys74, Thr75, Thr76, 137 to 139 (EDY), Arg180, Tyr190, and Arg227 contribute to the ATP site. Thr75 contributes to the Mg(2+) binding site. The segment at 191–261 (DAEQLSRIVR…VADAALAMLD (71 aa)) is small ATPAse domain (RuvB-S). The interval 264–356 (PVGFDLMDRK…NLWDTPDAEC (93 aa)) is head domain (RuvB-H). DNA-binding residues include Arg300, Arg319, and Arg324.

Belongs to the RuvB family. In terms of assembly, homohexamer. Forms an RuvA(8)-RuvB(12)-Holliday junction (HJ) complex. HJ DNA is sandwiched between 2 RuvA tetramers; dsDNA enters through RuvA and exits via RuvB. An RuvB hexamer assembles on each DNA strand where it exits the tetramer. Each RuvB hexamer is contacted by two RuvA subunits (via domain III) on 2 adjacent RuvB subunits; this complex drives branch migration. In the full resolvosome a probable DNA-RuvA(4)-RuvB(12)-RuvC(2) complex forms which resolves the HJ.

It is found in the cytoplasm. The enzyme catalyses ATP + H2O = ADP + phosphate + H(+). Its function is as follows. The RuvA-RuvB-RuvC complex processes Holliday junction (HJ) DNA during genetic recombination and DNA repair, while the RuvA-RuvB complex plays an important role in the rescue of blocked DNA replication forks via replication fork reversal (RFR). RuvA specifically binds to HJ cruciform DNA, conferring on it an open structure. The RuvB hexamer acts as an ATP-dependent pump, pulling dsDNA into and through the RuvAB complex. RuvB forms 2 homohexamers on either side of HJ DNA bound by 1 or 2 RuvA tetramers; 4 subunits per hexamer contact DNA at a time. Coordinated motions by a converter formed by DNA-disengaged RuvB subunits stimulates ATP hydrolysis and nucleotide exchange. Immobilization of the converter enables RuvB to convert the ATP-contained energy into a lever motion, pulling 2 nucleotides of DNA out of the RuvA tetramer per ATP hydrolyzed, thus driving DNA branch migration. The RuvB motors rotate together with the DNA substrate, which together with the progressing nucleotide cycle form the mechanistic basis for DNA recombination by continuous HJ branch migration. Branch migration allows RuvC to scan DNA until it finds its consensus sequence, where it cleaves and resolves cruciform DNA. The protein is Holliday junction branch migration complex subunit RuvB of Burkholderia pseudomallei (strain 668).